The sequence spans 244 residues: Orotidine 5'-phosphate decarboxylase (244 aa).

Substrate-binding positions include aspartate 14, lysine 36, aspartate 63 to threonine 72, threonine 127, arginine 188, glutamine 197, glycine 217, and arginine 218. Catalysis depends on lysine 65, which acts as the Proton donor.

It belongs to the OMP decarboxylase family. Type 1 subfamily. In terms of assembly, homodimer.

The enzyme catalyses orotidine 5'-phosphate + H(+) = UMP + CO2. Its pathway is pyrimidine metabolism; UMP biosynthesis via de novo pathway; UMP from orotate: step 2/2. Functionally, catalyzes the decarboxylation of orotidine 5'-monophosphate (OMP) to uridine 5'-monophosphate (UMP). The protein is Orotidine 5'-phosphate decarboxylase of Syntrophotalea carbinolica (strain DSM 2380 / NBRC 103641 / GraBd1) (Pelobacter carbinolicus).